The following is a 261-amino-acid chain: Carnitinyl-CoA dehydratase (261 aa).

Glutamate 111 functions as the Nucleophile in the catalytic mechanism. Catalysis depends on glutamate 131, which acts as the Proton acceptor.

The protein belongs to the enoyl-CoA hydratase/isomerase family.

The catalysed reaction is (R)-carnitinyl-CoA = crotonobetainyl-CoA + H2O. Its pathway is amine and polyamine metabolism; carnitine metabolism. Catalyzes the reversible dehydration of L-carnitinyl-CoA to crotonobetainyl-CoA. The chain is Carnitinyl-CoA dehydratase from Salmonella typhimurium (strain LT2 / SGSC1412 / ATCC 700720).